A 180-amino-acid chain; its full sequence is ATP-dependent protease subunit HslV (180 aa).

The active site involves T9. Residues A164, C167, and T170 each contribute to the Na(+) site.

Belongs to the peptidase T1B family. HslV subfamily. A double ring-shaped homohexamer of HslV is capped on each side by a ring-shaped HslU homohexamer. The assembly of the HslU/HslV complex is dependent on binding of ATP.

Its subcellular location is the cytoplasm. It catalyses the reaction ATP-dependent cleavage of peptide bonds with broad specificity.. Its activity is regulated as follows. Allosterically activated by HslU binding. Its function is as follows. Protease subunit of a proteasome-like degradation complex believed to be a general protein degrading machinery. The protein is ATP-dependent protease subunit HslV of Leptospira borgpetersenii serovar Hardjo-bovis (strain JB197).